The following is a 111-amino-acid chain: Disintegrin subunit alpha (111 aa).

The N-terminal stretch at 1-20 (MIQVLLVTICLAVFPYQGSS) is a signal peptide. A propeptide spanning residues 21–44 (IILESGNVNDYEVVYPRKITPLPK) is cleaved from the precursor. In terms of domain architecture, Disintegrin spans 45–111 (GAVQPKNPCC…GDCPRKHFYA (67 aa)). Disulfide bonds link Cys53-Cys76, Cys67-Cys73, Cys72-Cys97, and Cys85-Cys104. The Cell attachment site motif lies at 89–91 (RGD). A propeptide spanning residues 110 to 111 (YA) is cleaved from the precursor.

This sequence belongs to the disintegrin family. Dimeric disintegrin subfamily. Heterodimer with subunit beta; disulfide-linked. As to expression, expressed by the venom gland.

It is found in the secreted. Functionally, acts by binding to alpha-IIb/beta-3 (ITGA2B/ITGB3) on the platelet surface and inhibits both ADP-induced platelet aggregation and platelet aggregate dissociation in human platelet-rich plasma. The protein is Disintegrin subunit alpha of Agkistrodon piscivorus leucostoma (Western cottonmouth).